Here is a 432-residue protein sequence, read N- to C-terminus: Amino acid transporter ANT1 (432 aa).

Positions 1–30 (MAIKDLTATTGDSSLPLIKSPPSETTGGDR) are disordered. Residues 1–35 (MAIKDLTATTGDSSLPLIKSPPSETTGGDRTSALQ) are Cytoplasmic-facing. A helical membrane pass occupies residues 36-56 (TLGNIIVSIVGTGVLGLPYAF). The Lumenal portion of the chain corresponds to 57 to 62 (RIAGWL). The chain crosses the membrane as a helical span at residues 63-83 (AGSLGVIIVGFATYYCMLLLI). Over 84–115 (QCRDKLESEEGEEESKTYGDLGFKCMGTKGRY) the chain is Cytoplasmic. A helical membrane pass occupies residues 116-136 (LTEFLIFTAQCGGSVAYLVFI). At 137-147 (GRNLSSIFSSY) the chain is on the lumenal side. Residues 148–168 (GLSMVSFILILVPIEVGLSWI) traverse the membrane as a helical segment. Residues 169–172 (TSLS) are Cytoplasmic-facing. A helical transmembrane segment spans residues 173–193 (ALSPFSIFADICNIIAMCFVV). Topologically, residues 194–219 (KENVEMVIEGDFSFSDRTAISSTIGG) are lumenal. Residues 220 to 240 (LPFAGGVAVFCFEGFAMTLAL) traverse the membrane as a helical segment. Topologically, residues 241–256 (ESSMREREAFPKLLAK) are cytoplasmic. Residues 257–277 (VLAGITFVYVLFGFCGYMAYG) form a helical membrane-spanning segment. Over 278 to 292 (DQTKDIITLNLPNNW) the chain is Lumenal. A helical membrane pass occupies residues 293 to 313 (SAIAVQIGLCVGLTFTFPIMV). At 314–353 (HPLNEIIEQKLKRIDWLQKHHNGYSNETGSVSKFAIFTTR) the chain is on the cytoplasmic side. Residues 354–374 (TLLVVGLAAIASLVPGFGTFA) traverse the membrane as a helical segment. Residues 375 to 379 (SLVGS) lie on the Lumenal side of the membrane. A helical transmembrane segment spans residues 380 to 400 (TLCALISFVLPASYHLTLLGP). Over 401–410 (SLNVWNKSID) the chain is Cytoplasmic. The chain crosses the membrane as a helical span at residues 411–431 (VFIVICGLIFAVYGTYNTIVG). Val-432 is a topological domain (lumenal).

It belongs to the amino acid/polyamine transporter 2 family. Amino acid/auxin permease (AAAP) (TC 2.A.18.8) subfamily. As to expression, ubiquitous. Highly expressed in flowers and cauline leaves and at lower levels in stems, leaves and roots.

It is found in the endoplasmic reticulum membrane. Its function is as follows. Translocates aromatic and neutral amino acids such as tyrosine, tryptophan, phenylalanine, histidine, proline, leucine, valine, glutamine, as well as arginine. Transports the auxins indole-3-acetic acid (IAA) and 2,4-dichlorophenoxyacetic acid (2,4-D). The protein is Amino acid transporter ANT1 of Arabidopsis thaliana (Mouse-ear cress).